An 845-amino-acid polypeptide reads, in one-letter code: Molybdenum cofactor sulfurase (845 aa).

Position 240 is an N6-(pyridoxal phosphate)lysine (lysine 240). Cysteine 404 is a catalytic residue. Positions 666–840 constitute an MOSC domain; the sequence is SFPQDSSPSS…LMVGDTVTPS (175 aa).

This sequence belongs to the class-V pyridoxal-phosphate-dependent aminotransferase family. MOCOS subfamily. Pyridoxal 5'-phosphate is required as a cofactor.

The enzyme catalyses Mo-molybdopterin + L-cysteine + AH2 = thio-Mo-molybdopterin + L-alanine + A + H2O. Its pathway is cofactor biosynthesis; molybdopterin biosynthesis. Sulfurates the molybdenum cofactor. Sulfation of molybdenum is essential for xanthine dehydrogenase (XDH) and aldehyde oxidase (ADO) enzymes in which molybdenum cofactor is liganded by 1 oxygen and 1 sulfur atom in active form. This is Molybdenum cofactor sulfurase from Aspergillus clavatus (strain ATCC 1007 / CBS 513.65 / DSM 816 / NCTC 3887 / NRRL 1 / QM 1276 / 107).